Here is a 209-residue protein sequence, read N- to C-terminus: Pyridoxine/pyridoxamine 5'-phosphate oxidase (209 aa).

Residues 57–62 (RMVLLK), 72–73 (YT), Lys-79, and Gln-101 contribute to the FMN site. Lys-62 is a binding site for substrate. Substrate-binding residues include Tyr-119, Arg-123, and Ser-127. Residues 136–137 (QS) and Trp-181 contribute to the FMN site. 187–189 (RLH) lines the substrate pocket. Position 191 (Arg-191) interacts with FMN.

The protein belongs to the pyridoxamine 5'-phosphate oxidase family. Homodimer. FMN is required as a cofactor.

The enzyme catalyses pyridoxamine 5'-phosphate + O2 + H2O = pyridoxal 5'-phosphate + H2O2 + NH4(+). It catalyses the reaction pyridoxine 5'-phosphate + O2 = pyridoxal 5'-phosphate + H2O2. It participates in cofactor metabolism; pyridoxal 5'-phosphate salvage; pyridoxal 5'-phosphate from pyridoxamine 5'-phosphate: step 1/1. Its pathway is cofactor metabolism; pyridoxal 5'-phosphate salvage; pyridoxal 5'-phosphate from pyridoxine 5'-phosphate: step 1/1. In terms of biological role, catalyzes the oxidation of either pyridoxine 5'-phosphate (PNP) or pyridoxamine 5'-phosphate (PMP) into pyridoxal 5'-phosphate (PLP). The sequence is that of Pyridoxine/pyridoxamine 5'-phosphate oxidase from Chelativorans sp. (strain BNC1).